Here is a 510-residue protein sequence, read N- to C-terminus: 1,3-beta-glucanosyltransferase gas5 (510 aa).

The N-terminal stretch at 1–22 (MNFLHFLTTSLLLLGGSRLALA) is a signal peptide. Residues C70 and C99 are joined by a disulfide bond. Y88 provides a ligand contact to (1,3-beta-D-glucosyl)n. N-linked (GlcNAc...) asparagine glycosylation is present at N147. Residues N158, E159, D200, and R205 each contribute to the (1,3-beta-D-glucosyl)n site. The active-site Proton donor is E159. 2 disulfide bridges follow: C214–C353 and C232–C264. N-linked (GlcNAc...) asparagine glycosylation is found at N216 and N252. E261 (nucleophile) is an active-site residue. Y300 serves as a coordination point for (1,3-beta-D-glucosyl)n. Residues N318, N337, and N397 are each glycosylated (N-linked (GlcNAc...) asparagine). Residues 424-456 (QSSTSGSSSGSSSASTTASSSSVSSGSSISSGS) form a disordered region. A lipid anchor (GPI-anchor amidated serine) is attached at S485. The propeptide at 486–510 (SASTFNLSRFYVFAGILAISGLVFA) is removed in mature form. N491 is a glycosylation site (N-linked (GlcNAc...) asparagine).

The protein belongs to the glycosyl hydrolase 72 family. Post-translationally, the GPI-anchor is attached to the protein in the endoplasmic reticulum and serves to target the protein to the cell surface. There, the glucosamine-inositol phospholipid moiety is cleaved off and the GPI-modified mannoprotein is covalently attached via its lipidless GPI glycan remnant to the 1,6-beta-glucan of the outer cell wall layer.

It is found in the secreted. The protein resides in the cell wall. The protein localises to the membrane. Its function is as follows. Splits internally a 1,3-beta-glucan molecule and transfers the newly generated reducing end (the donor) to the non-reducing end of another 1,3-beta-glucan molecule (the acceptor) forming a 1,3-beta linkage, resulting in the elongation of 1,3-beta-glucan chains in the cell wall. The chain is 1,3-beta-glucanosyltransferase gas5 (gas5) from Schizosaccharomyces pombe (strain 972 / ATCC 24843) (Fission yeast).